A 479-amino-acid polypeptide reads, in one-letter code: Aldehyde dehydrogenase family 3 member B2 (479 aa).

Residues glutamate 223 and cysteine 257 contribute to the active site. Cysteine 476 is modified (cysteine methyl ester). Cysteine 476 is lipidated: S-geranylgeranyl cysteine. A propeptide spans 477–479 (TLL) (removed in mature form).

The protein belongs to the aldehyde dehydrogenase family. Geranylgeranylation is important for localization to lipid droplets and enzyme activity. In terms of tissue distribution, expressed in testis, white adipose tissue, lung, small intestine, kidney, spleen and liver.

It localises to the lipid droplet. The enzyme catalyses an aldehyde + NAD(+) + H2O = a carboxylate + NADH + 2 H(+). It catalyses the reaction a long-chain fatty aldehyde + NAD(+) + H2O = a long-chain fatty acid + NADH + 2 H(+). It carries out the reaction a medium-chain fatty aldehyde + NAD(+) + H2O = a medium-chain fatty acid + NADH + 2 H(+). The catalysed reaction is hexadecanoate + NADH + 2 H(+) = hexadecanal + NAD(+) + H2O. The enzyme catalyses octanal + NAD(+) + H2O = octanoate + NADH + 2 H(+). Its pathway is alcohol metabolism; ethanol degradation; acetate from ethanol: step 2/2. In terms of biological role, oxidizes medium and long chain fatty aldehydes in lipid droplets into non-toxic fatty acids. The polypeptide is Aldehyde dehydrogenase family 3 member B2 (Mus musculus (Mouse)).